We begin with the raw amino-acid sequence, 146 residues long: SMR1 protein (146 aa).

The N-terminal stretch at 1–22 is a signal peptide; sequence MKSLYLIFGLWILLACFQSGEG. Disordered stretches follow at residues 23 to 43 and 99 to 146; these read VRGP…TLPH and TAPD…GGGK. Residues 109–139 are compositionally biased toward polar residues; that stretch reads PPTQLHSTEQANTKTDAKISNTTATTQNSTD. Residues Asn-129 and Asn-136 are each glycosylated (N-linked (GlcNAc...) asparagine).

Several O-linked glycosylation sites might be present in the C-terminal part. As to expression, expressed predominantly in the acinar cells of the submandibular gland and to lesser extent in the prostate.

It localises to the secreted. Sialorphin may be involved in the modulation of mineral balance between at least four systems: kidney, bone, tooth and circulation. Its function is as follows. Submandibular gland peptide T is able to directly or indirectly down-regulate cardiovascular depression induced by septic shock (endotoxin stimuli), or anaphylactic challenge (nematode antigen sensitization). In terms of biological role, sialorphin is an endogenous inhibitor of neprilysin. Inhibits the breakdown of Met-enkephalin and substance P in isolated tissue from the dorsal zone of the rat spinal cord. Has an analgesic effect when administered to rats by intravenous injection. In Rattus norvegicus (Rat), this protein is SMR1 protein (Vcsa1).